Consider the following 315-residue polypeptide: Replication factor C small subunit (315 aa).

43–50 (GSPGVGKT) is a binding site for ATP.

Belongs to the activator 1 small subunits family. RfcS subfamily. In terms of assembly, heteromultimer composed of small subunits (RfcS) and large subunits (RfcL).

In terms of biological role, part of the RFC clamp loader complex which loads the PCNA sliding clamp onto DNA. This chain is Replication factor C small subunit, found in Methanococcus vannielii (strain ATCC 35089 / DSM 1224 / JCM 13029 / OCM 148 / SB).